The primary structure comprises 219 residues: MADVNDFLRNWGGRQEPTISEKIKNLFKSQQPLRYRLVMANYRLRTTISRLDVYISKLQERDRSLFEKVVESQISKDSARAAMYANEIAEIRKITKQLLTTEIALEQVQLRLETITEIGDIFTSLVPVIGVIRELRNVMKGVMPELSIELADLEEGLQEVVLEAGEFTGARVDFATSSPEARKILDEASAVAEQRMKEKFPSLPSFATSVDQKTNANQK.

Functionally, part of a cell division machinery. The polypeptide is Cell division protein B2 (Sulfolobus acidocaldarius (strain ATCC 33909 / DSM 639 / JCM 8929 / NBRC 15157 / NCIMB 11770)).